Consider the following 360-residue polypeptide: Protein Wnt-2 (360 aa).

Residues methionine 1–serine 25 form the signal peptide. 11 cysteine pairs are disulfide-bonded: cysteine 76–cysteine 87, cysteine 127–cysteine 135, cysteine 137–cysteine 157, cysteine 206–cysteine 220, cysteine 208–cysteine 215, cysteine 278–cysteine 309, cysteine 294–cysteine 304, cysteine 308–cysteine 348, cysteine 324–cysteine 339, cysteine 326–cysteine 336, and cysteine 331–cysteine 332. Residue serine 212 is the site of O-palmitoleoyl serine; by PORCN attachment. Asparagine 295 carries an N-linked (GlcNAc...) asparagine glycan.

The protein belongs to the Wnt family. Post-translationally, palmitoleoylation is required for efficient binding to frizzled receptors. Depalmitoleoylation leads to Wnt signaling pathway inhibition.

Its subcellular location is the secreted. It localises to the extracellular space. The protein localises to the extracellular matrix. In terms of biological role, ligand for members of the frizzled family of seven transmembrane receptors. Functions in the canonical Wnt signaling pathway that results in activation of transcription factors of the TCF/LEF family. Functions as a upstream regulator of FGF10 expression. Plays an important role in embryonic lung development. May contribute to embryonic brain development by regulating the proliferation of dopaminergic precursors and neurons. In Gorilla gorilla gorilla (Western lowland gorilla), this protein is Protein Wnt-2 (WNT2).